A 208-amino-acid chain; its full sequence is Octanoyltransferase (208 aa).

The BPL/LPL catalytic domain maps to 31–208; it reads GSEREMVWLL…LKKEFYKVFA (178 aa). Residues 70–77, 142–144, and 155–157 contribute to the substrate site; these read RGGKYSYH, AFG, and GVA. Catalysis depends on Cys-173, which acts as the Acyl-thioester intermediate.

The protein belongs to the LipB family.

The protein resides in the cytoplasm. It catalyses the reaction octanoyl-[ACP] + L-lysyl-[protein] = N(6)-octanoyl-L-lysyl-[protein] + holo-[ACP] + H(+). It functions in the pathway protein modification; protein lipoylation via endogenous pathway; protein N(6)-(lipoyl)lysine from octanoyl-[acyl-carrier-protein]: step 1/2. In terms of biological role, catalyzes the transfer of endogenously produced octanoic acid from octanoyl-acyl-carrier-protein onto the lipoyl domains of lipoate-dependent enzymes. Lipoyl-ACP can also act as a substrate although octanoyl-ACP is likely to be the physiological substrate. This is Octanoyltransferase from Anaplasma phagocytophilum (strain HZ).